Reading from the N-terminus, the 183-residue chain is Inner membrane protein YgjV (183 aa).

Residues Met1–Thr2 lie on the Periplasmic side of the membrane. Residues Ala3–Phe23 traverse the membrane as a helical segment. Over Asn24–Ser38 the chain is Cytoplasmic. The helical transmembrane segment at Ala39 to Leu59 threads the bilayer. Residues Asn60 to Arg71 are Periplasmic-facing. 2 consecutive transmembrane segments (helical) span residues Ser72–His92 and His93–Cys113. At Lys114–Asn133 the chain is on the periplasmic side. Residues Phe134 to Leu154 form a helical membrane-spanning segment. The Cytoplasmic segment spans residues Asn155 to Gly183.

It is found in the cell inner membrane. The polypeptide is Inner membrane protein YgjV (ygjV) (Escherichia coli (strain K12)).